The following is a 912-amino-acid chain: Putative respiratory burst oxidase homolog protein J (912 aa).

Disordered regions lie at residues 1-51 (MKNN…GGGI) and 73-112 (WRKS…RTTS). Over 1–323 (MKNNKKVGTE…VVVTAELMYE (323 aa)) the chain is Cytoplasmic. Polar residues-rich tracts occupy residues 29 to 44 (SVKQ…NPES) and 78 to 87 (NLGSPSTRKS). EF-hand-like stretches follow at residues 147–155 (AVDGRLPKD) and 181–193 (RQIK…DKEQ). The 36-residue stretch at 205–240 (DLDCRLQIFFDMCDKDGDGKLTEEEVKEVIVLSASA) folds into the EF-hand domain. Ca(2+) is bound by residues aspartate 218, aspartate 220, aspartate 222, lysine 224, and glutamate 229. At serine 294 the chain carries Phosphoserine. Residues 324 to 344 (HWKKIWVVTLWLAVNVVLFMW) form a helical membrane-spanning segment. Residues 345–363 (KYEEFTTSPLYNITGRCLC) are Extracellular-facing. Residues 364–384 (AAKGTAEILKLNMALILVPVL) traverse the membrane as a helical segment. A Ferric oxidoreductase domain is found at 366–523 (KGTAEILKLN…LLVIAYALLI (158 aa)). Residues 385–410 (RRTLTFLRSTFLNHLIPFDDNINFHK) are Cytoplasmic-facing. A helical transmembrane segment spans residues 411–431 (LIAVAIAVISLLHTALHMLCN). Over 432-458 (YPRLSSCPYNFYSDYAGNLLGAKQPTY) the chain is Extracellular. The chain crosses the membrane as a helical span at residues 459–479 (LGLMLTPVSVTGVLMIIFMGI). The Cytoplasmic portion of the chain corresponds to 480–510 (SFTLAMHYFRRNIVKLPIPFNRLAGFNSFWY). A helical transmembrane segment spans residues 511 to 531 (AHHLLVIAYALLIIHGYILII). Topologically, residues 532 to 697 (EKPWYQKTTW…PYGAPAQSYQ (166 aa)) are extracellular. The 134-residue stretch at 562-695 (EHNHRVHIIK…KGPYGAPAQS (134 aa)) folds into the FAD-binding FR-type domain. A helical membrane pass occupies residues 698–718 (KFDILLLIGLGIGATPFISIL). At 719-912 (KDMLNNLKPG…TRFTFHKENF (194 aa)) the chain is on the cytoplasmic side.

Belongs to the RBOH (TC 5.B.1.3) family. Monomer and homodimer.

The protein resides in the membrane. Its function is as follows. Calcium-dependent NADPH oxidase that generates superoxide. The polypeptide is Putative respiratory burst oxidase homolog protein J (RBOHJ) (Arabidopsis thaliana (Mouse-ear cress)).